Consider the following 525-residue polypeptide: GMP synthase [glutamine-hydrolyzing] (525 aa).

Positions 9–207 (RILILDFGSQ…VLDICGCAAL (199 aa)) constitute a Glutamine amidotransferase type-1 domain. The active-site Nucleophile is the Cys86. Catalysis depends on residues His181 and Glu183. The region spanning 208 to 400 (WTPSNIVDDA…LGLPYDMVYR (193 aa)) is the GMPS ATP-PPase domain. Position 235–241 (235–241 (SGGVDSS)) interacts with ATP.

In terms of assembly, homodimer.

The catalysed reaction is XMP + L-glutamine + ATP + H2O = GMP + L-glutamate + AMP + diphosphate + 2 H(+). It functions in the pathway purine metabolism; GMP biosynthesis; GMP from XMP (L-Gln route): step 1/1. Functionally, catalyzes the synthesis of GMP from XMP. The polypeptide is GMP synthase [glutamine-hydrolyzing] (Pseudomonas aeruginosa (strain UCBPP-PA14)).